The primary structure comprises 294 residues: tRNA pseudouridine synthase B (294 aa).

The active-site Nucleophile is the aspartate 40.

The protein belongs to the pseudouridine synthase TruB family. Type 1 subfamily.

It carries out the reaction uridine(55) in tRNA = pseudouridine(55) in tRNA. Functionally, responsible for synthesis of pseudouridine from uracil-55 in the psi GC loop of transfer RNAs. The polypeptide is tRNA pseudouridine synthase B (Synechococcus elongatus (strain ATCC 33912 / PCC 7942 / FACHB-805) (Anacystis nidulans R2)).